The following is a 448-amino-acid chain: Probable glycine dehydrogenase (decarboxylating) subunit 1 (448 aa).

The protein belongs to the GcvP family. N-terminal subunit subfamily. The glycine cleavage system is composed of four proteins: P, T, L and H. In this organism, the P 'protein' is a heterodimer of two subunits.

It catalyses the reaction N(6)-[(R)-lipoyl]-L-lysyl-[glycine-cleavage complex H protein] + glycine + H(+) = N(6)-[(R)-S(8)-aminomethyldihydrolipoyl]-L-lysyl-[glycine-cleavage complex H protein] + CO2. The glycine cleavage system catalyzes the degradation of glycine. The P protein binds the alpha-amino group of glycine through its pyridoxal phosphate cofactor; CO(2) is released and the remaining methylamine moiety is then transferred to the lipoamide cofactor of the H protein. This chain is Probable glycine dehydrogenase (decarboxylating) subunit 1, found in Staphylococcus aureus (strain Mu3 / ATCC 700698).